Reading from the N-terminus, the 205-residue chain is Meiotic nuclear division protein 1 homolog (205 aa).

An N-acetylserine modification is found at Ser-2. Residues 83–173 (KRKLEALNSQ…EAANRWTDNI (91 aa)) are a coiled coil.

This sequence belongs to the MND1 family. In terms of assembly, heterodimer with PSMC3IP/HOP2. MND1-PSMC3IP interacts with DMC1 and RAD51 and binds to ssDNA and dsDNA showing no preference for either form of DNA.

It localises to the nucleus. In terms of biological role, required for proper homologous chromosome pairing and efficient cross-over and intragenic recombination during meiosis. Stimulates both DMC1- and RAD51-mediated homologous strand assimilation, which is required for the resolution of meiotic double-strand breaks. The polypeptide is Meiotic nuclear division protein 1 homolog (Mus musculus (Mouse)).